Reading from the N-terminus, the 390-residue chain is 5-hydroxytryptamine receptor 1B (390 aa).

Residues 1-46 (MEEPGAQCAPPPPAGSETWVPQANLSSAPSQNCSAKDYIYQDSISL) are Extracellular-facing. 2 N-linked (GlcNAc...) asparagine glycosylation sites follow: N24 and N32. The helical transmembrane segment at 47 to 72 (PWKVLLVMLLALITLATTLSNAFVIA) threads the bilayer. Residues 73-86 (TVYRTRKLHTPANY) are Cytoplasmic-facing. Residues 87-111 (LIASLAVTDLLVSILVMPISTMYTV) form a helical membrane-spanning segment. Residues 112–119 (TGRWTLGQ) lie on the Extracellular side of the membrane. A helical membrane pass occupies residues 120 to 145 (VVCDFWLSSDITCCTASILHLCVIAL). A disulfide bridge links C122 with C199. Ergotamine-binding residues include D129 and T134. A DRY motif; important for ligand-induced conformation changes and signaling motif is present at residues 146-148 (DRY). Residues 146–165 (DRYWAITDAVEYSAKRTPKR) are Cytoplasmic-facing. A helical transmembrane segment spans residues 166–184 (AAVMIALVWVFSISISLPP). Residues 185 to 205 (FFWRQAKAEEEVSECVVNTDH) lie on the Extracellular side of the membrane. V201 lines the ergotamine pocket. Residues 206–229 (ILYTVYSTVGAFYFPTLLLIALYG) traverse the membrane as a helical segment. Over 230 to 315 (RIYVEARSRI…AARERKATKT (86 aa)) the chain is Cytoplasmic. Positions 259–272 (DSPGSTSSVTSINS) are enriched in polar residues. Residues 259-281 (DSPGSTSSVTSINSRVPDVPSES) are disordered. A helical transmembrane segment spans residues 316–337 (LGIILGAFIVCWLPFFIISLVM). Residues 338 to 347 (PICKDACWFH) are Extracellular-facing. A helical transmembrane segment spans residues 348–370 (LAIFDFFTWLGYLNSLINPIIYT). The NPxxY motif; important for ligand-induced conformation changes and signaling motif lies at 365-369 (NPIIY). Over 371–390 (MSNEDFKQAFHKLIRFKCTS) the chain is Cytoplasmic. The S-palmitoyl cysteine moiety is linked to residue C388.

This sequence belongs to the G-protein coupled receptor 1 family. As to quaternary structure, homodimer. Heterodimer with HTR1D. In terms of processing, phosphorylated. Desensitization of the receptor may be mediated by its phosphorylation. Post-translationally, palmitoylated. As to expression, detected in cerebral artery smooth muscle cells (at protein level). Detected in brain cortex, striatum, amygdala, medulla, hippocampus, caudate nucleus and putamen.

The protein localises to the cell membrane. Functionally, G-protein coupled receptor for 5-hydroxytryptamine (serotonin). Also functions as a receptor for ergot alkaloid derivatives, various anxiolytic and antidepressant drugs and other psychoactive substances, such as lysergic acid diethylamide (LSD). Ligand binding causes a conformation change that triggers signaling via guanine nucleotide-binding proteins (G proteins) and modulates the activity of downstream effectors, such as adenylate cyclase. HTR1B is coupled to G(i)/G(o) G alpha proteins and mediates inhibitory neurotransmission by inhibiting adenylate cyclase activity. Arrestin family members inhibit signaling via G proteins and mediate activation of alternative signaling pathways. Regulates the release of 5-hydroxytryptamine, dopamine and acetylcholine in the brain, and thereby affects neural activity, nociceptive processing, pain perception, mood and behavior. Besides, plays a role in vasoconstriction of cerebral arteries. The chain is 5-hydroxytryptamine receptor 1B from Homo sapiens (Human).